Reading from the N-terminus, the 268-residue chain is Glucosamine-6-phosphate deaminase (268 aa).

Residue D72 is the Proton acceptor; for enolization step of the active site. D141 (for ring-opening step) is an active-site residue. H143 acts as the Proton acceptor; for ring-opening step in catalysis. Residue E148 is the For ring-opening step of the active site.

It belongs to the glucosamine/galactosamine-6-phosphate isomerase family. NagB subfamily. Homohexamer.

It catalyses the reaction alpha-D-glucosamine 6-phosphate + H2O = beta-D-fructose 6-phosphate + NH4(+). It participates in amino-sugar metabolism; N-acetylneuraminate degradation; D-fructose 6-phosphate from N-acetylneuraminate: step 5/5. Allosterically activated by N-acetylglucosamine 6-phosphate (GlcNAc6P). In terms of biological role, catalyzes the reversible isomerization-deamination of glucosamine 6-phosphate (GlcN6P) to form fructose 6-phosphate (Fru6P) and ammonium ion. The protein is Glucosamine-6-phosphate deaminase of Proteus mirabilis (strain HI4320).